Here is a 128-residue protein sequence, read N- to C-terminus: Ferric uptake regulation protein homolog (128 aa).

This sequence belongs to the Fur family.

The sequence is that of Ferric uptake regulation protein homolog from Archaeoglobus fulgidus (strain ATCC 49558 / DSM 4304 / JCM 9628 / NBRC 100126 / VC-16).